The chain runs to 361 residues: Fructose-bisphosphate aldolase (361 aa).

S63 is a binding site for D-glyceraldehyde 3-phosphate. D110 (proton donor) is an active-site residue. H111, D145, E175, and H227 together coordinate Zn(2+). Dihydroxyacetone phosphate is bound at residue G228. H266 lines the Zn(2+) pocket. Dihydroxyacetone phosphate-binding positions include 267-269 (GGS) and 288-291 (NLDT).

This sequence belongs to the class II fructose-bisphosphate aldolase family. In terms of assembly, homodimer. Requires Zn(2+) as cofactor.

It carries out the reaction beta-D-fructose 1,6-bisphosphate = D-glyceraldehyde 3-phosphate + dihydroxyacetone phosphate. Its pathway is carbohydrate degradation; glycolysis; D-glyceraldehyde 3-phosphate and glycerone phosphate from D-glucose: step 4/4. Catalyzes the aldol condensation of dihydroxyacetone phosphate (DHAP or glycerone-phosphate) with glyceraldehyde 3-phosphate (G3P) to form fructose 1,6-bisphosphate (FBP) in gluconeogenesis and the reverse reaction in glycolysis. The chain is Fructose-bisphosphate aldolase (FBA1) from Kluyveromyces lactis (strain ATCC 8585 / CBS 2359 / DSM 70799 / NBRC 1267 / NRRL Y-1140 / WM37) (Yeast).